Consider the following 185-residue polypeptide: Ribosome-recycling factor (185 aa).

This sequence belongs to the RRF family.

Its subcellular location is the cytoplasm. In terms of biological role, responsible for the release of ribosomes from messenger RNA at the termination of protein biosynthesis. May increase the efficiency of translation by recycling ribosomes from one round of translation to another. This is Ribosome-recycling factor from Salmonella paratyphi A (strain ATCC 9150 / SARB42).